The primary structure comprises 169 residues: Probable calcium-binding protein CML20 (169 aa).

The segment at 1 to 23 (MSSIYRTVSRKEKPRRHHGLTTQ) is disordered. 4 EF-hand domains span residues 23–58 (QKKQ…LGFE), 59–94 (MTEE…KIGE), 96–131 (DTKE…LGEN), and 132–167 (FTDA…TAYG). Ca(2+) is bound by residues Asp36, Asp38, Ser40, Thr42, Glu47, Asp72, Asp74, Ser76, Glu83, Asp109, Asp111, Asn113, Lys115, Asp120, Asp145, Asp147, Asp149, Glu151, and Glu156.

As to quaternary structure, interacts with TON1A and TON1B. Interacts with SAC3A and SAC3B. Interacts with UCH1 and UCH2.

Its function is as follows. Potential calcium sensor. The polypeptide is Probable calcium-binding protein CML20 (Arabidopsis thaliana (Mouse-ear cress)).